The following is a 685-amino-acid chain: Methionine--tRNA ligase (685 aa).

Residues C142, C145, C155, and C158 each coordinate Zn(2+). The short motif at K330–S334 is the 'KMSKS' region element. K333 lines the ATP pocket. One can recognise a tRNA-binding domain in the interval D584–S685.

Belongs to the class-I aminoacyl-tRNA synthetase family. MetG type 1 subfamily. As to quaternary structure, homodimer. It depends on Zn(2+) as a cofactor.

It localises to the cytoplasm. It catalyses the reaction tRNA(Met) + L-methionine + ATP = L-methionyl-tRNA(Met) + AMP + diphosphate. In terms of biological role, is required not only for elongation of protein synthesis but also for the initiation of all mRNA translation through initiator tRNA(fMet) aminoacylation. The polypeptide is Methionine--tRNA ligase (Acinetobacter baylyi (strain ATCC 33305 / BD413 / ADP1)).